The following is a 498-amino-acid chain: DELTA-thalatoxin-Avl2a (498 aa).

An N-terminal signal peptide occupies residues 1–22 (MSPYFKLSSALIFLAITMEALC). Residues 23–35 (SPIENTSTSNKDN) constitute a propeptide that is removed on maturation. Residues 23-359 (SPIENTSTSN…GFLHFGCSFL (337 aa)) form the MACPF domain. Positions 135–159 (AAVTNNIASSEEEVQGLSLNLKAYS) form a coiled coil. Cystine bridges form between C389-C402, C396-C410, and C412-C422. An EGF-like domain is found at 410 to 422 (CECGGPYDLARTC).

Its subcellular location is the secreted. The protein resides in the nematocyst. Is lethal to mice, and may cause hemolytic activity. In Actineria villosa (Okinawan sea anemone), this protein is DELTA-thalatoxin-Avl2a.